The chain runs to 342 residues: GTPase Obg (342 aa).

Residues 1–159 form the Obg domain; the sequence is MQFIDRAEIE…RNLRLELKLL (159 aa). The region spanning 160–328 is the OBG-type G domain; sequence AEVGIIGLPN…LLQAIWHRLD (169 aa). Residues 166–173, 191–195, 213–216, 280–283, and 309–311 each bind GTP; these read GLPNAGKS, FTTLV, DIPG, NKVD, and SAV. Mg(2+) is bound by residues serine 173 and threonine 193.

Belongs to the TRAFAC class OBG-HflX-like GTPase superfamily. OBG GTPase family. Monomer. It depends on Mg(2+) as a cofactor.

It localises to the cytoplasm. Its function is as follows. An essential GTPase which binds GTP, GDP and possibly (p)ppGpp with moderate affinity, with high nucleotide exchange rates and a fairly low GTP hydrolysis rate. Plays a role in control of the cell cycle, stress response, ribosome biogenesis and in those bacteria that undergo differentiation, in morphogenesis control. The polypeptide is GTPase Obg (Crocosphaera subtropica (strain ATCC 51142 / BH68) (Cyanothece sp. (strain ATCC 51142))).